Here is a 294-residue protein sequence, read N- to C-terminus: Acetylglutamate kinase (294 aa).

Residues glycine 63–glycine 64, arginine 85, and asparagine 188 contribute to the substrate site.

It belongs to the acetylglutamate kinase family. ArgB subfamily.

It localises to the cytoplasm. The enzyme catalyses N-acetyl-L-glutamate + ATP = N-acetyl-L-glutamyl 5-phosphate + ADP. Its pathway is amino-acid biosynthesis; L-arginine biosynthesis; N(2)-acetyl-L-ornithine from L-glutamate: step 2/4. In terms of biological role, catalyzes the ATP-dependent phosphorylation of N-acetyl-L-glutamate. The protein is Acetylglutamate kinase of Methanococcus maripaludis (strain DSM 14266 / JCM 13030 / NBRC 101832 / S2 / LL).